The chain runs to 375 residues: N5-carboxyaminoimidazole ribonucleotide synthase (375 aa).

Residues arginine 108, lysine 148, 153-159 (GYDGKGQ), 183-186 (EQYL), glutamate 191, histidine 214, and 266-267 (NE) contribute to the ATP site. The ATP-grasp domain maps to 112-296 (KQTLLEANTQ…QFDTHILAIT (185 aa)).

The protein belongs to the PurK/PurT family. Homodimer.

It catalyses the reaction 5-amino-1-(5-phospho-beta-D-ribosyl)imidazole + hydrogencarbonate + ATP = 5-carboxyamino-1-(5-phospho-D-ribosyl)imidazole + ADP + phosphate + 2 H(+). Its pathway is purine metabolism; IMP biosynthesis via de novo pathway; 5-amino-1-(5-phospho-D-ribosyl)imidazole-4-carboxylate from 5-amino-1-(5-phospho-D-ribosyl)imidazole (N5-CAIR route): step 1/2. Catalyzes the ATP-dependent conversion of 5-aminoimidazole ribonucleotide (AIR) and HCO(3)(-) to N5-carboxyaminoimidazole ribonucleotide (N5-CAIR). The sequence is that of N5-carboxyaminoimidazole ribonucleotide synthase from Staphylococcus epidermidis (strain ATCC 35984 / DSM 28319 / BCRC 17069 / CCUG 31568 / BM 3577 / RP62A).